The primary structure comprises 327 residues: Phenylalanine--tRNA ligase alpha subunit (327 aa).

Glu-252 contacts Mg(2+).

The protein belongs to the class-II aminoacyl-tRNA synthetase family. Phe-tRNA synthetase alpha subunit type 1 subfamily. As to quaternary structure, tetramer of two alpha and two beta subunits. It depends on Mg(2+) as a cofactor.

Its subcellular location is the cytoplasm. It catalyses the reaction tRNA(Phe) + L-phenylalanine + ATP = L-phenylalanyl-tRNA(Phe) + AMP + diphosphate + H(+). The sequence is that of Phenylalanine--tRNA ligase alpha subunit from Shewanella oneidensis (strain ATCC 700550 / JCM 31522 / CIP 106686 / LMG 19005 / NCIMB 14063 / MR-1).